The sequence spans 2828 residues: Matrix-remodeling-associated protein 5 (2828 aa).

An N-terminal signal peptide occupies residues 1–26 (MPKRAHWGALSVVLILLWGHPRVALA). An LRRNT domain is found at 27–55 (CPHPCACYVPSEVHCTFRSLASVPAGIAK). LRR repeat units follow at residues 56–77 (HVER…SFAG), 80–101 (KLEL…ALRD), 104–125 (SLQV…TLQG), 128–149 (NLMR…AFNG), 152–173 (SLRL…TFST), and 184–205 (TIRH…MLRN). Residues 217–277 (NPWTCDCEMR…HKLKDMTCLK (61 aa)) form the LRRCT domain. N-linked (GlcNAc...) asparagine glycosylation is found at N287 and N321. Ig-like C2-type domains follow at residues 481–571 (PSGA…YRVL) and 575–669 (PSTQ…ITVT). 2 cysteine pairs are disulfide-bonded: C501–C555 and C599–C651. N633 is a glycosylation site (N-linked (GlcNAc...) asparagine). 5 disordered regions span residues 671-715 (KGSG…RRLL), 933-962 (KPTH…EYEP), 1068-1190 (QGGN…APDI), 1204-1275 (AWVD…SSET), and 1367-1389 (EESS…AQPG). Over residues 695-708 (IVEDEGGSGMGDEE) the composition is skewed to acidic residues. S702 carries an O-linked (Xyl...) (chondroitin sulfate) serine glycan. Residues 951–962 (SSPEPTSSEYEP) show a composition bias toward low complexity. Positions 1090–1107 (SKSITLPDSTLGIMSSMS) are enriched in polar residues. The segment covering 1146-1168 (PSRRRPNGRRRLRPNKFRHRHKQ) has biased composition (basic residues). Composition is skewed to polar residues over residues 1169–1190 (TPPT…APDI) and 1204–1214 (AWVDNTVNTPK). The segment covering 1229–1243 (TPRRKHGKRPNKHRY) has biased composition (basic residues). Residue N1403 is glycosylated (N-linked (GlcNAc...) asparagine). Residues 1410-1434 (LKELEDVDFTSEFLSSLTVSTPFHQ) form an LRR 7 repeat. Disordered regions lie at residues 1479 to 1499 (QNHT…PSTI), 1536 to 1566 (NPET…SDQD), 1579 to 1603 (QVFG…HASH), 1669 to 1689 (STTI…KFTD), and 1700 to 1719 (KVFG…KPPS). Over residues 1542–1566 (TPVNNEGTQHMSGPNELSTPSSDQD) the composition is skewed to polar residues. A glycan (N-linked (GlcNAc...) asparagine) is linked at N1735. 10 consecutive Ig-like C2-type domains span residues 1853–1946 (PQIL…LSVT), 1950–2041 (PQIL…IRLH), 2046–2140 (PPVI…LNVQ), 2146–2239 (ARIT…VDVV), 2242–2343 (PAKI…KVVT), 2345–2432 (PATI…KTVW), 2440–2534 (PKIN…LQLT), 2542–2630 (PIFH…RLVS), 2637–2722 (PEAN…PSVT), and 2733–2828 (PRIT…IHVF). 2 disulfides stabilise this stretch: C1875–C1928 and C1972–C2025. N-linked (GlcNAc...) asparagine glycans are attached at residues N2007 and N2056. 8 disulfide bridges follow: C2069-C2122, C2168-C2221, C2265-C2324, C2368-C2418, C2466-C2518, C2564-C2616, C2659-C2711, and C2755-C2810. N2693 is a glycosylation site (N-linked (GlcNAc...) asparagine).

As to expression, detected in placenta (at protein level). Detected in cerebrospinal fluid and fibroblasts (at protein level). Highly expressed in kidney, also detected on liver and spleen. Expressed by proximal tubular cells of the kidney (at protein level). Expression highly increases during chronic kidney disease and autosomal dominant polycystic kidney disease, where is detected in cysts.

It localises to the secreted. In terms of biological role, in kidney, has anti-inflammatory and anti-fibrotic properties by limiting the induction of chemokines, fibronectin and collagen expression in response to TGB1 and pro-inflammatory stimuli. The chain is Matrix-remodeling-associated protein 5 (MXRA5) from Homo sapiens (Human).